The sequence spans 182 residues: Bifunctional protein PyrR (182 aa).

A PRPP-binding motif is present at residues 99–111 (VILVDDVLYTGRT).

The protein belongs to the purine/pyrimidine phosphoribosyltransferase family. PyrR subfamily. In terms of assembly, homodimer and homohexamer; in equilibrium.

The enzyme catalyses UMP + diphosphate = 5-phospho-alpha-D-ribose 1-diphosphate + uracil. In terms of biological role, regulates transcriptional attenuation of the pyrimidine nucleotide (pyr) operon by binding in a uridine-dependent manner to specific sites on pyr mRNA. This disrupts an antiterminator hairpin in the RNA and favors formation of a downstream transcription terminator, leading to a reduced expression of downstream genes. Functionally, also displays a weak uracil phosphoribosyltransferase activity which is not physiologically significant. This chain is Bifunctional protein PyrR, found in Alkaliphilus metalliredigens (strain QYMF).